Here is a 119-residue protein sequence, read N- to C-terminus: Parathyroid hormone (119 aa).

The N-terminal stretch at 1–25 (MTSTKNLAKAIVILYAICFFTNSDG) is a signal peptide. Positions 26 to 31 (RPMMKR) are excised as a propeptide.

The protein belongs to the parathyroid hormone family. Interacts with PTH1R (via N-terminal extracellular domain).

The protein localises to the secreted. Functionally, parathyroid hormone elevates calcium level by dissolving the salts in bone and preventing their renal excretion. Acts by binding to its receptor, PTH1R, activating G protein-coupled receptor signaling. Stimulates [1-14C]-2-deoxy-D-glucose (2DG) transport and glycogen synthesis in osteoblastic cells. This chain is Parathyroid hormone, found in Gallus gallus (Chicken).